The sequence spans 332 residues: UDP-N-acetylenolpyruvoylglucosamine reductase (332 aa).

In terms of domain architecture, FAD-binding PCMH-type spans Val55–Gly221. Arg200 is an active-site residue. The active-site Proton donor is Ser251. Glu321 is an active-site residue.

The protein belongs to the MurB family. FAD serves as cofactor.

Its subcellular location is the cytoplasm. The enzyme catalyses UDP-N-acetyl-alpha-D-muramate + NADP(+) = UDP-N-acetyl-3-O-(1-carboxyvinyl)-alpha-D-glucosamine + NADPH + H(+). Its pathway is cell wall biogenesis; peptidoglycan biosynthesis. In terms of biological role, cell wall formation. This chain is UDP-N-acetylenolpyruvoylglucosamine reductase, found in Nostoc punctiforme (strain ATCC 29133 / PCC 73102).